A 140-amino-acid polypeptide reads, in one-letter code: 3-hydroxyacyl-[acyl-carrier-protein] dehydratase FabZ (140 aa).

The active site involves H47.

The protein belongs to the thioester dehydratase family. FabZ subfamily.

It localises to the cytoplasm. The catalysed reaction is a (3R)-hydroxyacyl-[ACP] = a (2E)-enoyl-[ACP] + H2O. In terms of biological role, involved in unsaturated fatty acids biosynthesis. Catalyzes the dehydration of short chain beta-hydroxyacyl-ACPs and long chain saturated and unsaturated beta-hydroxyacyl-ACPs. The sequence is that of 3-hydroxyacyl-[acyl-carrier-protein] dehydratase FabZ from Streptococcus gordonii (strain Challis / ATCC 35105 / BCRC 15272 / CH1 / DL1 / V288).